A 934-amino-acid polypeptide reads, in one-letter code: MTESKNSFNAKQTLEVGDKSYDYFALSAVKGMEKLPYSLKVLGENLLRTEDGANITADHINAIANWDPSAEPSIEIQFTPARVLMQDFTGVPCVVDLATMREAVKTLGGDPDKVNPLNPAEMVIDHSVIIEAFGSTLALAKNVEIEYERNEERYQFLRWGSKAFSNFRVVPPGTGIVHQVNIENLARVVFDNNGLAYPDTCIGTDSHTTMENGLGILGWGVGGIEAEAAMLGQPVSMLIPRVVGFKLTGEIPAGVTATDVVLTITEMLREHGVVQKFVEFYGNGVKSIPLANRATIGNMSPEFGSTCAIFPIDEETVKYMHLTGRSEEQVALVEAYAKAQGMWLEQDAPEAEYSEYLELDLSTVVPSIAGPKRPQDRILLTEAKEQFRKDLPDYCSAEPVDESLPAKRMDSEGAVQKEGEDVAGYNSSRAGHGESAAEGAAGRQSNPVVVSSPNGGEYTLDHGMVAIASITSCTNTSNPSVMIGAGLIARKAAAKGLKAKPWVKTICAPGSQVVDGYYKRADLWKDLEALGFYLSGFGCTTCIGNSGPLPEEISAAINENDLTATAVLSGNRNFEGRISPDVKMNYLVSPIMVIAYAIAGTMDFDFETQPLGQDIDGNDVFLKDIWPSTEEIEETIAGAISRELYEADYADVFKGDEQWQNLPTPEGKTFDWDEKSTYIRKAPYFDGMTMEPAPVSDIKGARVLAKLGDSVTTDHISPASSIKPGTPAAQYLDENGVARNDYNSLGSRRGNHEVMMRGTFANIRLQNQLVDIAGGYTRDFTKNGEQAFIFDACQNYKAAGIPLVVIAGKEYGTGSSRDWAAKGTNLLGVKAVITESFERIHRSNLIGMGVIPLQFPAGESHASLGLDGTETFDIEGIEELNNGVTPKTVHVTATKESGDQVEFDAVVRIDTPGEADYYRNGGILQYVLRNMINA.

A disordered region spans residues 398-454 (EPVDESLPAKRMDSEGAVQKEGEDVAGYNSSRAGHGESAAEGAAGRQSNPVVVSSPN). The segment covering 404 to 420 (LPAKRMDSEGAVQKEGE) has biased composition (basic and acidic residues). Low complexity predominate over residues 427 to 445 (SSRAGHGESAAEGAAGRQS). Residues Cys-473, Cys-539, and Cys-542 each contribute to the [4Fe-4S] cluster site.

Belongs to the aconitase/IPM isomerase family. As to quaternary structure, monomer. Requires [4Fe-4S] cluster as cofactor.

The enzyme catalyses citrate = D-threo-isocitrate. It catalyses the reaction (2S,3R)-3-hydroxybutane-1,2,3-tricarboxylate = 2-methyl-cis-aconitate + H2O. The protein operates within carbohydrate metabolism; tricarboxylic acid cycle; isocitrate from oxaloacetate: step 2/2. It participates in organic acid metabolism; propanoate degradation. Involved in the catabolism of short chain fatty acids (SCFA) via the tricarboxylic acid (TCA)(acetyl degradation route) and probably via the 2-methylcitrate cycle I (propionate degradation route). Catalyzes the reversible isomerization of citrate to isocitrate via cis-aconitate. Could catalyze the hydration of 2-methyl-cis-aconitate to yield (2R,3S)-2-methylisocitrate. The apo form of AcnA functions as a RNA-binding regulatory protein. In Corynebacterium diphtheriae (strain ATCC 700971 / NCTC 13129 / Biotype gravis), this protein is Aconitate hydratase A (acn).